The chain runs to 313 residues: tRNA dimethylallyltransferase (313 aa).

11–18 (GPTAAGKS) is a binding site for ATP. 13–18 (TAAGKS) serves as a coordination point for substrate. Interaction with substrate tRNA stretches follow at residues 36 to 39 (DSAT), 160 to 164 (QRIQR), and 244 to 249 (RCVGYR).

Belongs to the IPP transferase family. Monomer. It depends on Mg(2+) as a cofactor.

It catalyses the reaction adenosine(37) in tRNA + dimethylallyl diphosphate = N(6)-dimethylallyladenosine(37) in tRNA + diphosphate. Catalyzes the transfer of a dimethylallyl group onto the adenine at position 37 in tRNAs that read codons beginning with uridine, leading to the formation of N6-(dimethylallyl)adenosine (i(6)A). This is tRNA dimethylallyltransferase from Bordetella parapertussis (strain 12822 / ATCC BAA-587 / NCTC 13253).